The sequence spans 279 residues: Dehydrogenase/reductase SDR family member 4 (279 aa).

Position 37–61 (37–61) interacts with NADP(+); that stretch reads LVTASTDGIGFAIARRLAQDGAHVV. At K93 the chain carries N6-acetyllysine; alternate. Position 93 is an N6-succinyllysine; alternate (K93). K106 carries the post-translational modification N6-acetyllysine. S170 contributes to the substrate binding site. Catalysis depends on Y183, which acts as the Proton acceptor. Residue K187 participates in NADP(+) binding. At S221 the chain carries Phosphoserine. K235 carries the post-translational modification N6-succinyllysine. Positions 277–279 match the Peroxisomal targeting signal motif; it reads SHL.

This sequence belongs to the short-chain dehydrogenases/reductases (SDR) family. Homotetramer.

Its subcellular location is the peroxisome. The enzyme catalyses a secondary alcohol + NADP(+) = a ketone + NADPH + H(+). It catalyses the reaction 3alpha-hydroxy-5beta-pregnan-20-one + NADP(+) = 5beta-pregnan-3,20-dione + NADPH + H(+). The catalysed reaction is 5beta-dihydrotestosterone + NADPH + H(+) = 5beta-androstane-3alpha,17beta-diol + NADP(+). It carries out the reaction all-trans-retinol + NADP(+) = all-trans-retinal + NADPH + H(+). The enzyme catalyses isatin + NADPH + H(+) = 3-hydroxyindolin-2-one + NADP(+). In terms of biological role, NADPH-dependent oxidoreductase which catalyzes the reduction of a variety of compounds bearing carbonyl groups including ketosteroids, alpha-dicarbonyl compounds, aldehydes, aromatic ketones and quinones. Reduces all-trans-retinal and 9-cis retinal. Reduces 3-ketosteroids and benzil into 3alpha-hydroxysteroids and S-benzoin, respectively, in contrast to the stereoselectivity of primates DHRS4s which produce 3beta-hydroxysteroids and R-benzoin. In the reverse reaction, catalyzes the NADP-dependent oxidation of 3alpha-hydroxysteroids and alcohol, but with much lower efficiency. Involved in the metabolism of 3alpha-hydroxysteroids, retinoid, isatin and xenobiotic carbonyl compounds. This Bos taurus (Bovine) protein is Dehydrogenase/reductase SDR family member 4 (DHRS4).